Reading from the N-terminus, the 835-residue chain is Outer membrane usher protein FasD (835 aa).

An N-terminal signal peptide occupies residues 1-21; that stretch reads MNKYPPLLTMLIIGIGSNAVA. A disulfide bond links cysteine 810 and cysteine 834.

The protein belongs to the fimbrial export usher family.

It localises to the cell outer membrane. Its function is as follows. Involved in the export and assembly of the 987P fimbriae subunits across the outer membrane. This is Outer membrane usher protein FasD (fasD) from Escherichia coli.